The primary structure comprises 385 residues: Acetate kinase (385 aa).

Position 9 (Asn-9) interacts with Mg(2+). Lys-16 is a binding site for ATP. Residue Arg-87 coordinates substrate. Residue Asp-144 is the Proton donor/acceptor of the active site. ATP is bound by residues 202–206 (HLGSG) and 277–279 (DMR). Glu-373 serves as a coordination point for Mg(2+).

This sequence belongs to the acetokinase family. As to quaternary structure, homodimer. It depends on Mg(2+) as a cofactor. Requires Mn(2+) as cofactor.

Its subcellular location is the cytoplasm. It catalyses the reaction acetate + ATP = acetyl phosphate + ADP. It participates in metabolic intermediate biosynthesis; acetyl-CoA biosynthesis; acetyl-CoA from acetate: step 1/2. Functionally, catalyzes the formation of acetyl phosphate from acetate and ATP. Can also catalyze the reverse reaction. This Rickettsia typhi (strain ATCC VR-144 / Wilmington) protein is Acetate kinase.